Reading from the N-terminus, the 188-residue chain is Elongation factor P (188 aa).

The protein belongs to the elongation factor P family.

The protein localises to the cytoplasm. Its pathway is protein biosynthesis; polypeptide chain elongation. Involved in peptide bond synthesis. Stimulates efficient translation and peptide-bond synthesis on native or reconstituted 70S ribosomes in vitro. Probably functions indirectly by altering the affinity of the ribosome for aminoacyl-tRNA, thus increasing their reactivity as acceptors for peptidyl transferase. The sequence is that of Elongation factor P from Cereibacter sphaeroides (strain KD131 / KCTC 12085) (Rhodobacter sphaeroides).